A 374-amino-acid polypeptide reads, in one-letter code: Type IV secretion system protein PtlG homolog (374 aa).

A helical membrane pass occupies residues 38-56 (WMFALVAVALSCLLATGIW). Residues 86 to 117 (HPREPEPAPLPDMPAAPDPILPQPRPAPPVPP) form a disordered region. The span at 92–117 (PAPLPDMPAAPDPILPQPRPAPPVPP) shows a compositional bias: pro residues.

The protein belongs to the TrbI/VirB10 family.

It is found in the cell membrane. This is Type IV secretion system protein PtlG homolog (ptlG) from Bordetella bronchiseptica (strain ATCC BAA-588 / NCTC 13252 / RB50) (Alcaligenes bronchisepticus).